A 376-amino-acid polypeptide reads, in one-letter code: Protein STRICTOSIDINE SYNTHASE-LIKE 8 (376 aa).

An N-terminal signal peptide occupies residues 1–31 (MPISRRVLTPITAAPVILAVLCFFFWSSIIG). 3 N-linked (GlcNAc...) asparagine glycosylation sites follow: Asn-98, Asn-172, and Asn-224.

Belongs to the strictosidine synthase family.

It localises to the vacuole. This Arabidopsis thaliana (Mouse-ear cress) protein is Protein STRICTOSIDINE SYNTHASE-LIKE 8.